We begin with the raw amino-acid sequence, 395 residues long: Tryptophan synthase beta chain (395 aa).

K86 carries the post-translational modification N6-(pyridoxal phosphate)lysine.

The protein belongs to the TrpB family. Tetramer of two alpha and two beta chains. Requires pyridoxal 5'-phosphate as cofactor.

It catalyses the reaction (1S,2R)-1-C-(indol-3-yl)glycerol 3-phosphate + L-serine = D-glyceraldehyde 3-phosphate + L-tryptophan + H2O. The protein operates within amino-acid biosynthesis; L-tryptophan biosynthesis; L-tryptophan from chorismate: step 5/5. In terms of biological role, the beta subunit is responsible for the synthesis of L-tryptophan from indole and L-serine. This chain is Tryptophan synthase beta chain, found in Psychromonas ingrahamii (strain DSM 17664 / CCUG 51855 / 37).